Consider the following 372-residue polypeptide: Virion morphogenesis protein OPG132 (372 aa).

This sequence belongs to the orthopoxvirus OPG132 family.

It localises to the host cytoplasm. The protein localises to the virion. In terms of biological role, lipid-bound viral membrane assembly protein that plays an essential role in immature virion (IV) to mature virion (MV) transition. Functions in both crescent-shaped viral membranes formation and its enclosure to form immature virions. In addition, participates in targeting mature virion proteins to sites of virion assembly to ensure their correct localization. The protein is Virion morphogenesis protein OPG132 (OPG132) of Homo sapiens (Human).